The chain runs to 1158 residues: Teashirt homolog 1 (1158 aa).

Disordered stretches follow at residues 70–126 (DDGR…DMDT), 170–228 (INST…ANNG), and 310–341 (TGHY…EMEG). Residues 76-88 (LSYQNSPLSNGTN) show a composition bias toward polar residues. 2 stretches are compositionally biased toward low complexity: residues 186–205 (SHAS…ASAS) and 213–228 (SSNS…ANNG). 2 consecutive C2H2-type zinc fingers follow at residues 288–312 (FRCK…ETGH) and 349–373 (LKCM…KTKH). Residues 310 to 326 (TGHYRDDNKDKEEDRGK) are compositionally biased toward basic and acidic residues. The interval 405–425 (PCSPDSISSTPGIPLAETAPT) is disordered. The segment at 461-485 (LKCMECGSSHDTLQQLTAHMMVTGH) adopts a C2H2-type 3 zinc-finger fold. Disordered stretches follow at residues 516–573 (PPTT…VEKS), 656–681 (LKSL…NHKS), and 693–748 (VTGK…VDKD). Residues 555–573 (EEKKIKQEKEDPSERVEKS) show a composition bias toward basic and acidic residues. Residues 656–671 (LKSLTSDSSTLIHSPS) show a composition bias toward low complexity. Composition is skewed to basic and acidic residues over residues 693–716 (VTGK…KHLT) and 724–748 (LKER…VDKD). A DNA-binding region (homeobox) is located at residues 963 to 1033 (RKGRQSNWNP…NVKYQLRRTG (71 aa)). 2 consecutive C2H2-type zinc fingers follow at residues 1048–1070 (FLCS…LESH) and 1115–1138 (FQCK…SKTH).

Belongs to the teashirt C2H2-type zinc-finger protein family.

It is found in the nucleus. Probable transcriptional regulator involved in developmental processes. May act as a transcriptional repressor (Potential). This Danio rerio (Zebrafish) protein is Teashirt homolog 1 (tshz1).